Reading from the N-terminus, the 109-residue chain is Nucleoid-associated protein VP2178 (109 aa).

2 disordered regions span residues 1–22 (MFGKGGMGNLMKQAQQMQERMQ) and 88–109 (QKEKMASVTGGMQLPPGMKMPF).

This sequence belongs to the YbaB/EbfC family. As to quaternary structure, homodimer.

The protein localises to the cytoplasm. It localises to the nucleoid. Functionally, binds to DNA and alters its conformation. May be involved in regulation of gene expression, nucleoid organization and DNA protection. The protein is Nucleoid-associated protein VP2178 of Vibrio parahaemolyticus serotype O3:K6 (strain RIMD 2210633).